Reading from the N-terminus, the 156-residue chain is Small ribosomal subunit protein uS7 (156 aa).

This sequence belongs to the universal ribosomal protein uS7 family. As to quaternary structure, part of the 30S ribosomal subunit. Contacts proteins S9 and S11.

One of the primary rRNA binding proteins, it binds directly to 16S rRNA where it nucleates assembly of the head domain of the 30S subunit. Is located at the subunit interface close to the decoding center, probably blocks exit of the E-site tRNA. The protein is Small ribosomal subunit protein uS7 of Bacillus mycoides (strain KBAB4) (Bacillus weihenstephanensis).